Reading from the N-terminus, the 349-residue chain is Phenylalanine--tRNA ligase alpha subunit (349 aa).

Glu259 serves as a coordination point for Mg(2+).

This sequence belongs to the class-II aminoacyl-tRNA synthetase family. Phe-tRNA synthetase alpha subunit type 1 subfamily. Tetramer of two alpha and two beta subunits. Mg(2+) is required as a cofactor.

The protein resides in the cytoplasm. It carries out the reaction tRNA(Phe) + L-phenylalanine + ATP = L-phenylalanyl-tRNA(Phe) + AMP + diphosphate + H(+). This Lactobacillus acidophilus (strain ATCC 700396 / NCK56 / N2 / NCFM) protein is Phenylalanine--tRNA ligase alpha subunit.